Reading from the N-terminus, the 454-residue chain is tRNA modification GTPase MnmE (454 aa).

Residues Arg23, Glu80, and Lys120 each contribute to the (6S)-5-formyl-5,6,7,8-tetrahydrofolate site. The 162-residue stretch at 216-377 (GMKVVIAGRP…LRNHLKQSMG (162 aa)) folds into the TrmE-type G domain. Asn226 contacts K(+). GTP is bound by residues 226 to 231 (NAGKSS), 245 to 251 (TDIAGTT), 270 to 273 (DTAG), 335 to 338 (NKAD), and 358 to 360 (SAR). Ser230 lines the Mg(2+) pocket. K(+) contacts are provided by Thr245, Ile247, and Thr250. Residue Thr251 participates in Mg(2+) binding. Residue Lys454 coordinates (6S)-5-formyl-5,6,7,8-tetrahydrofolate.

This sequence belongs to the TRAFAC class TrmE-Era-EngA-EngB-Septin-like GTPase superfamily. TrmE GTPase family. Homodimer. Heterotetramer of two MnmE and two MnmG subunits. K(+) is required as a cofactor.

Its subcellular location is the cytoplasm. Its function is as follows. Exhibits a very high intrinsic GTPase hydrolysis rate. Involved in the addition of a carboxymethylaminomethyl (cmnm) group at the wobble position (U34) of certain tRNAs, forming tRNA-cmnm(5)s(2)U34. This chain is tRNA modification GTPase MnmE, found in Shigella flexneri serotype 5b (strain 8401).